The following is a 455-amino-acid chain: Epoxide hydrolase 1 (455 aa).

Residues 1–21 (MWLEILLTSVLGFAIYWFISR) form a helical; Signal-anchor for type III membrane protein membrane-spanning segment. Residues 22–455 (DKEETLPLED…RKFLSVLERQ (434 aa)) are Cytoplasmic-facing. D226 (nucleophile) is an active-site residue. R295 is modified (dimethylated arginine). Y374 functions as the Proton donor in the catalytic mechanism. H431 (proton acceptor) is an active-site residue.

The protein belongs to the peptidase S33 family. In terms of tissue distribution, found in liver.

The protein resides in the microsome membrane. It is found in the endoplasmic reticulum membrane. The enzyme catalyses cis-stilbene oxide + H2O = (1R,2R)-hydrobenzoin. It catalyses the reaction 1-(4-methoxyphenyl)-N-methyl-N-[(3-methyloxetan-3-yl)methyl]methanamine + H2O = 2-{[(4-methoxybenzyl)(methyl)amino]methyl}-2-methylpropane-1,3-diol. It carries out the reaction 8,9-epoxy-(5Z,11Z,14Z)-eicosatrienoate + H2O = 8,9-dihydroxy-(5Z,11Z,14Z)-eicosatrienoate. The catalysed reaction is 11,12-epoxy-(5Z,8Z,14Z)-eicosatrienoate + H2O = 11,12-dihydroxy-(5Z,8Z,14Z)-eicosatrienoate. The enzyme catalyses 2-(5Z,8Z,11Z,14Z-eicosatetraenoyl)-glycerol + H2O = glycerol + (5Z,8Z,11Z,14Z)-eicosatetraenoate + H(+). With respect to regulation, inhibited by 10-hydroxystearamide and methoxy-arachidonyl fluorophosphate. Biotransformation enzyme that catalyzes the hydrolysis of arene and aliphatic epoxides to less reactive and more water soluble dihydrodiols by the trans addition of water. Plays a role in the metabolism of endogenous lipids such as epoxide-containing fatty acids. Metabolizes the abundant endocannabinoid 2-arachidonoylglycerol (2-AG) to free arachidonic acid (AA) and glycerol. Binds 20(S)-hydroxycholesterol (20(S)-OHC). The sequence is that of Epoxide hydrolase 1 from Homo sapiens (Human).